A 359-amino-acid chain; its full sequence is DNA replication and repair protein RecF (359 aa).

30-37 (GANGSGKT) contributes to the ATP binding site.

This sequence belongs to the RecF family.

It localises to the cytoplasm. Functionally, the RecF protein is involved in DNA metabolism; it is required for DNA replication and normal SOS inducibility. RecF binds preferentially to single-stranded, linear DNA. It also seems to bind ATP. In Vibrio atlanticus (strain LGP32) (Vibrio splendidus (strain Mel32)), this protein is DNA replication and repair protein RecF.